Reading from the N-terminus, the 137-residue chain is uncharacterized protein (137 aa).

Positions 58–135 (VHVVAKTVRP…EVNLQMFLMN (78 aa)) constitute a Ubiquitin-like domain.

It localises to the cytoplasm. The protein localises to the nucleus. This is an uncharacterized protein from Schizosaccharomyces pombe (strain 972 / ATCC 24843) (Fission yeast).